Consider the following 917-residue polypeptide: Nitrate reductase [NADH] 1 (917 aa).

The disordered stretch occupies residues D62–P81. A compositionally biased stretch (acidic residues) spans S63–E74. C197 contacts Mo-molybdopterin. Positions S545–I620 constitute a Cytochrome b5 heme-binding domain. Heme contacts are provided by H580 and H603. Residues R660 to K772 form the FAD-binding FR-type domain. Residues R712 to T715, V729 to Y733, F734, F741, L746 to S748, and T799 contribute to the FAD site.

The protein belongs to the nitrate reductase family. As to quaternary structure, homodimer. It depends on FAD as a cofactor. Heme is required as a cofactor. Requires Mo-molybdopterin as cofactor. As to expression, root, leaf, and shoot.

It catalyses the reaction nitrite + NAD(+) + H2O = nitrate + NADH + H(+). Its function is as follows. Nitrate reductase is a key enzyme involved in the first step of nitrate assimilation in plants, fungi and bacteria. The chain is Nitrate reductase [NADH] 1 (NIA1) from Arabidopsis thaliana (Mouse-ear cress).